The sequence spans 94 residues: DNA-directed RNA polymerase subunit omega (94 aa).

This sequence belongs to the RNA polymerase subunit omega family. In terms of assembly, the RNAP catalytic core consists of 2 alpha, 1 beta, 1 beta' and 1 omega subunit. When a sigma factor is associated with the core the holoenzyme is formed, which can initiate transcription.

The catalysed reaction is RNA(n) + a ribonucleoside 5'-triphosphate = RNA(n+1) + diphosphate. Promotes RNA polymerase assembly. Latches the N- and C-terminal regions of the beta' subunit thereby facilitating its interaction with the beta and alpha subunits. The sequence is that of DNA-directed RNA polymerase subunit omega from Bifidobacterium longum (strain DJO10A).